Reading from the N-terminus, the 51-residue chain is rpoE leader peptide (51 aa).

A short protein whose stop codon overlaps with the start codon of downstream rpoE; a premature stop codon at position 12 results in decreased expression of ECF sigma factor RpoE, thus they are translationally coupled. This chain is rpoE leader peptide, found in Escherichia coli (strain K12).